We begin with the raw amino-acid sequence, 33 residues long: Brevinin-2GRb (33 aa).

In terms of tissue distribution, expressed by the skin glands.

Its subcellular location is the secreted. Functionally, antimicrobial peptide active against the Gram-positive bacterium S.aureus (MIC=25 uM) and against the Gram-negative bacteria E.coli (MIC=6 uM). Has no antifungal activity against C.albicans. Shows hemolytic activity against human erythrocytes only at high concentrations (LC(50)=180 uM). The chain is Brevinin-2GRb from Odorrana grahami (Yunnanfu frog).